A 95-amino-acid chain; its full sequence is Large ribosomal subunit protein uL23 (95 aa).

The protein belongs to the universal ribosomal protein uL23 family. As to quaternary structure, part of the 50S ribosomal subunit. Contacts protein L29, and trigger factor when it is bound to the ribosome.

One of the early assembly proteins it binds 23S rRNA. One of the proteins that surrounds the polypeptide exit tunnel on the outside of the ribosome. Forms the main docking site for trigger factor binding to the ribosome. The sequence is that of Large ribosomal subunit protein uL23 from Desulfitobacterium hafniense (strain DSM 10664 / DCB-2).